A 470-amino-acid chain; its full sequence is Cannabinoid receptor type 1B (470 aa).

Over 1–113 (MKLALHRIAG…CFMILTPAQQ (113 aa)) the chain is Extracellular. 2 N-linked (GlcNAc...) asparagine glycosylation sites follow: Asn-78 and Asn-86. Residues 114–139 (LVIVILAITLGTFTVLENFVVLCVIL) traverse the membrane as a helical segment. Residues 140–151 (HSHTLRSRPSYH) are Cytoplasmic-facing. A helical transmembrane segment spans residues 152 to 172 (FIGSLAVADLIGSIIFVYSFL). At 173–184 (DFHVLHRKDSPS) the chain is on the extracellular side. A helical membrane pass occupies residues 185-209 (IFLFKLAGVIASFTASVGSLFLTAI). At 210–229 (DRYVSIHRPMAYKRIITKTK) the chain is on the cytoplasmic side. A helical membrane pass occupies residues 230 to 252 (AVIAFSVMWAISIEFSLLPLLGW). Residues 253 to 270 (NCKRLHSVCSDIFPLIDE) are Extracellular-facing. The helical transmembrane segment at 271–296 (KYLMFWIGMTTVLLLFIIYAYMFILW) threads the bilayer. At 297 to 341 (KSHHHAVRMLSRSSQRSIIVYTSEGTKVQTVRPEQARMDLRLAKT) the chain is on the cytoplasmic side. A helical transmembrane segment spans residues 342 to 362 (LVLILVALIICWGPLLAIMVY). The Extracellular segment spans residues 363-374 (DLFGRVNDFIKT). A helical transmembrane segment spans residues 375–396 (VFAFCSMLCLLNSTINPVIYAM). Residues 397-470 (RSKDLRRAFV…VTASSPAEAV (74 aa)) lie on the Cytoplasmic side of the membrane. Cys-412 is lipidated: S-palmitoyl cysteine. Polar residues predominate over residues 418–434 (SLDSSAESDWNSRSVRS). Residues 418-450 (SLDSSAESDWNSRSVRSTGGRAGKDRSVGGKPQ) form a disordered region.

Belongs to the G-protein coupled receptor 1 family. Post-translationally, palmitoylation at Cys-412 is important for recruitment at both plasma membrane and lipid rafts and association with G protein alpha subunits.

It is found in the cell membrane. The protein resides in the mitochondrion outer membrane. Its subcellular location is the cell projection. The protein localises to the axon. It localises to the presynapse. In terms of biological role, G-protein coupled receptor for cannabinoids. Mediates many cannabinoid-induced effects in the central nervous system (CNS), as well as in peripheral tissues. Regulates cellular respiration and energy production in response to cannabinoids. Signaling typically involves reduction in cyclic AMP. The polypeptide is Cannabinoid receptor type 1B (cnr1b) (Takifugu rubripes (Japanese pufferfish)).